A 324-amino-acid polypeptide reads, in one-letter code: 2-dehydro-3-deoxygluconokinase (324 aa).

Residues 35-39 (GAESN), 106-108 (YYR), and Arg170 contribute to the substrate site. ATP is bound by residues 168 to 170 (NVR), 228 to 233 (KLGKEG), and 258 to 261 (GAGD). Asp261 and Asp297 together coordinate substrate. Asp261 serves as the catalytic Proton acceptor.

This sequence belongs to the carbohydrate kinase PfkB family.

The enzyme catalyses 2-dehydro-3-deoxy-D-gluconate + ATP = 2-dehydro-3-deoxy-6-phospho-D-gluconate + ADP + H(+). It functions in the pathway carbohydrate acid metabolism; 2-dehydro-3-deoxy-D-gluconate degradation; D-glyceraldehyde 3-phosphate and pyruvate from 2-dehydro-3-deoxy-D-gluconate: step 1/2. Its function is as follows. Catalyzes the phosphorylation of 2-keto-3-deoxygluconate (KDG) to produce 2-keto-3-deoxy-6-phosphogluconate (KDPG). This Bacillus subtilis (strain 168) protein is 2-dehydro-3-deoxygluconokinase (kdgK).